The primary structure comprises 1242 residues: DNA polymerase catalytic subunit (1242 aa).

4 disordered regions span residues 14–38 (GAVA…RPPQ), 644–665 (LQSA…SSSS), 877–898 (EGDS…GGSN), and 1108–1163 (TAPQ…KPPS). The segment covering 653 to 665 (GVSPGSGSNSSSS) has biased composition (low complexity). Residues 1110 to 1119 (PQGSSDNGDS) are compositionally biased toward polar residues. Over residues 1145–1155 (ESNRRGGEPAK) the composition is skewed to basic and acidic residues.

The protein belongs to the DNA polymerase type-B family. Forms a complex with the ssDNA-binding protein UL57, the DNA polymerase processivity factor UL44, and the alkaline exonuclease UL98. Interacts with the putative helicase-primase complex composed of UL70, UL102 and UL105 proteins; these interactions may coordinate leading and lagging strand DNA synthesis at the replication fork.

The protein localises to the host nucleus. The enzyme catalyses DNA(n) + a 2'-deoxyribonucleoside 5'-triphosphate = DNA(n+1) + diphosphate. In terms of biological role, replicates viral genomic DNA in the late phase of lytic infection, producing long concatemeric DNA. The replication complex is composed of six viral proteins: the DNA polymerase, processivity factor, primase, primase-associated factor, helicase, and ssDNA-binding protein. This is DNA polymerase catalytic subunit (UL54) from Homo sapiens (Human).